Reading from the N-terminus, the 401-residue chain is Histone acetyltransferase type B subunit 2 (401 aa).

WD repeat units lie at residues 116-147, 158-189, 206-237, 249-280, and 293-324; these read EHEEEITRARYMPQDPNIVATINGQGTVFLYS, FHKDNGYALSFSTLVKGRLLSGSDDHTVALWE, LHSDIINDNKWHNFNKDLFGTVSEDSLLKIND, KCPQPFNTLAFSHHSSNLLAAAGMDSYVYLYD, and GHEDAVNNLEFSTHVDGVVVSSGSDNRLMMWD. Residues 335–339 form an interaction with the histone H4 N-terminus region; the sequence is DDAED. Residues 350–381 form a WD 6 repeat; that stretch reads GHRSSVNDFDLNPQIPWLVASAEEENILQVWK.

Belongs to the WD repeat RBAP46/RBAP48/MSI1 family. In terms of assembly, component of the HAT-B complex composed of at least HAT1 and HAT2. In the cytoplasm, this complex binds to the histone H4 tail. In the nucleus, the HAT-B complex has an additional component, the histone H3/H4 chaperone HIF1.

Its subcellular location is the cytoplasm. The protein resides in the nucleus. Its function is as follows. Regulatory subunit of the histone acetylase B (HAT-B) complex. The complex acetylates 'Lys-12' of histone H4 which is required for telomeric silencing. HAT2 is required for high affinity binding of the acetyltransferase to histone H4, for the nuclear location of HAT1 and for the HAT1-HIF1 interaction. Alone, it is unable to bind to H4, requiring HAT1 for high affinity interaction with the histone tail. HAT2 also has a HAT1 independent function in life-span regulation. This Saccharomyces cerevisiae (strain ATCC 204508 / S288c) (Baker's yeast) protein is Histone acetyltransferase type B subunit 2 (HAT2).